Reading from the N-terminus, the 363-residue chain is UDP-N-acetylglucosamine--N-acetylmuramyl-(pentapeptide) pyrophosphoryl-undecaprenol N-acetylglucosamine transferase (363 aa).

UDP-N-acetyl-alpha-D-glucosamine-binding positions include 12–14 (TGG), Asn122, Arg164, Ser191, Ile245, and Gln290.

The protein belongs to the glycosyltransferase 28 family. MurG subfamily.

It localises to the cell membrane. It catalyses the reaction di-trans,octa-cis-undecaprenyl diphospho-N-acetyl-alpha-D-muramoyl-L-alanyl-D-glutamyl-meso-2,6-diaminopimeloyl-D-alanyl-D-alanine + UDP-N-acetyl-alpha-D-glucosamine = di-trans,octa-cis-undecaprenyl diphospho-[N-acetyl-alpha-D-glucosaminyl-(1-&gt;4)]-N-acetyl-alpha-D-muramoyl-L-alanyl-D-glutamyl-meso-2,6-diaminopimeloyl-D-alanyl-D-alanine + UDP + H(+). It participates in cell wall biogenesis; peptidoglycan biosynthesis. In terms of biological role, cell wall formation. Catalyzes the transfer of a GlcNAc subunit on undecaprenyl-pyrophosphoryl-MurNAc-pentapeptide (lipid intermediate I) to form undecaprenyl-pyrophosphoryl-MurNAc-(pentapeptide)GlcNAc (lipid intermediate II). This Lawsonia intracellularis (strain PHE/MN1-00) protein is UDP-N-acetylglucosamine--N-acetylmuramyl-(pentapeptide) pyrophosphoryl-undecaprenol N-acetylglucosamine transferase.